A 291-amino-acid polypeptide reads, in one-letter code: 4-hydroxy-tetrahydrodipicolinate synthase (291 aa).

Residue Thr44 coordinates pyruvate. Tyr132 serves as the catalytic Proton donor/acceptor. Catalysis depends on Lys160, which acts as the Schiff-base intermediate with substrate. Pyruvate is bound at residue Ile202.

It belongs to the DapA family. As to quaternary structure, homotetramer; dimer of dimers.

It is found in the cytoplasm. The enzyme catalyses L-aspartate 4-semialdehyde + pyruvate = (2S,4S)-4-hydroxy-2,3,4,5-tetrahydrodipicolinate + H2O + H(+). It participates in amino-acid biosynthesis; L-lysine biosynthesis via DAP pathway; (S)-tetrahydrodipicolinate from L-aspartate: step 3/4. Functionally, catalyzes the condensation of (S)-aspartate-beta-semialdehyde [(S)-ASA] and pyruvate to 4-hydroxy-tetrahydrodipicolinate (HTPA). The chain is 4-hydroxy-tetrahydrodipicolinate synthase from Zymomonas mobilis subsp. mobilis (strain ATCC 31821 / ZM4 / CP4).